A 355-amino-acid polypeptide reads, in one-letter code: Probable L-aspartate decarboxylase (355 aa).

The residue at position 210 (Lys210) is an N6-(pyridoxal phosphate)lysine.

The protein belongs to the group II decarboxylase family. MfnA subfamily. Requires pyridoxal 5'-phosphate as cofactor.

The catalysed reaction is L-aspartate + H(+) = beta-alanine + CO2. The protein operates within cofactor biosynthesis; coenzyme A biosynthesis. Catalyzes the decarboxylation of L-aspartate to produce beta-alanine. The chain is Probable L-aspartate decarboxylase from Halobacterium salinarum (strain ATCC 29341 / DSM 671 / R1).